The chain runs to 261 residues: HLA class II histocompatibility antigen, DM alpha chain (261 aa).

The signal sequence occupies residues 1–26 (MGHEQNQGAALLQMLPLLWLLPHSWA). An alpha-1 region spans residues 27-124 (VPEAPTPMWP…KLDGKIPVSR (98 aa)). Over 27–233 (VPEAPTPMWP…PSDLLENVLC (207 aa)) the chain is Lumenal. N41 carries N-linked (GlcNAc...) asparagine glycosylation. 2 disulfide bridges follow: C50–C105 and C147–C202. An Ig-like C1-type domain is found at 121–215 (PVSRGFPIAE…HEIDRYTAIA (95 aa)). The interval 125 to 217 (GFPIAEVFTL…IDRYTAIAYW (93 aa)) is alpha-2. Residues 218–233 (VPRNALPSDLLENVLC) are connecting peptide. The helical transmembrane segment at 234 to 254 (GVAFGLGVLGIIVGIVLIIYF) threads the bilayer. Residues 255 to 261 (RKPCSGD) are Cytoplasmic-facing.

The protein belongs to the MHC class II family. As to quaternary structure, heterodimer of an alpha chain (DMA) and a beta chain (DMB). Interacts with MHCII; this interaction mediates rapid selection of high-affinity peptides in a pH-dependent manner, with an optimum at pH 5.5.

It localises to the late endosome membrane. Its subcellular location is the lysosome membrane. Its function is as follows. Plays a critical role in catalyzing the release of class II-associated invariant chain peptide (CLIP) from newly synthesized MHC class II molecules and freeing the peptide binding site for acquisition of antigenic peptides. In B-cells, the interaction between HLA-DM and MHC class II molecules is regulated by HLA-DO. The chain is HLA class II histocompatibility antigen, DM alpha chain (HLA-DMA) from Homo sapiens (Human).